A 290-amino-acid polypeptide reads, in one-letter code: 4-hydroxy-tetrahydrodipicolinate synthase (290 aa).

T44 is a pyruvate binding site. The Proton donor/acceptor role is filled by Y132. The active-site Schiff-base intermediate with substrate is the K160. Residue I202 participates in pyruvate binding.

This sequence belongs to the DapA family. Homotetramer; dimer of dimers.

It is found in the cytoplasm. The catalysed reaction is L-aspartate 4-semialdehyde + pyruvate = (2S,4S)-4-hydroxy-2,3,4,5-tetrahydrodipicolinate + H2O + H(+). Its pathway is amino-acid biosynthesis; L-lysine biosynthesis via DAP pathway; (S)-tetrahydrodipicolinate from L-aspartate: step 3/4. In terms of biological role, catalyzes the condensation of (S)-aspartate-beta-semialdehyde [(S)-ASA] and pyruvate to 4-hydroxy-tetrahydrodipicolinate (HTPA). The sequence is that of 4-hydroxy-tetrahydrodipicolinate synthase from Geotalea uraniireducens (strain Rf4) (Geobacter uraniireducens).